The primary structure comprises 189 residues: dTTP/UTP pyrophosphatase (189 aa).

D71 acts as the Proton acceptor in catalysis.

The protein belongs to the Maf family. YhdE subfamily. A divalent metal cation is required as a cofactor.

The protein resides in the cytoplasm. It catalyses the reaction dTTP + H2O = dTMP + diphosphate + H(+). The catalysed reaction is UTP + H2O = UMP + diphosphate + H(+). Nucleoside triphosphate pyrophosphatase that hydrolyzes dTTP and UTP. May have a dual role in cell division arrest and in preventing the incorporation of modified nucleotides into cellular nucleic acids. In Pseudoalteromonas translucida (strain TAC 125), this protein is dTTP/UTP pyrophosphatase.